Consider the following 448-residue polypeptide: tRNA modification GTPase MnmE (448 aa).

3 residues coordinate (6S)-5-formyl-5,6,7,8-tetrahydrofolate: arginine 25, glutamate 83, and lysine 122. The region spanning glycine 218–aspartate 372 is the TrmE-type G domain. Asparagine 228 provides a ligand contact to K(+). Residues asparagine 228 to serine 233, serine 247 to threonine 253, and aspartate 272 to glycine 275 contribute to the GTP site. Position 232 (serine 232) interacts with Mg(2+). K(+) contacts are provided by serine 247, isoleucine 249, and threonine 252. Threonine 253 lines the Mg(2+) pocket. Residue lysine 448 participates in (6S)-5-formyl-5,6,7,8-tetrahydrofolate binding.

It belongs to the TRAFAC class TrmE-Era-EngA-EngB-Septin-like GTPase superfamily. TrmE GTPase family. In terms of assembly, homodimer. Heterotetramer of two MnmE and two MnmG subunits. K(+) is required as a cofactor.

The protein localises to the cytoplasm. Exhibits a very high intrinsic GTPase hydrolysis rate. Involved in the addition of a carboxymethylaminomethyl (cmnm) group at the wobble position (U34) of certain tRNAs, forming tRNA-cmnm(5)s(2)U34. This chain is tRNA modification GTPase MnmE, found in Nitratiruptor sp. (strain SB155-2).